Consider the following 461-residue polypeptide: Toxin CfTX-B (461 aa).

The N-terminal stretch at 1–24 (MDPRISSRLRALALLVFVISITDG) is a signal peptide. Positions 25–31 (IPNRAKR) are excised as a propeptide.

This sequence belongs to the jellyfish toxin family. Type II subfamily. In terms of assembly, oligomer. Contains 2 disulfide bonds. In terms of tissue distribution, nematocytes.

The protein resides in the secreted. It localises to the nematocyst. Its subcellular location is the target cell membrane. Functionally, the fraction containing this toxin and CfTX-B shows potent hemolytic activity. This fraction causes minor effects on the cardiovascular system of anesthetized rats (at 25 ug/kg), since it has no significant effects on heart rate but produces relatively small increases in mean arterial pressure. This is Toxin CfTX-B from Chironex fleckeri (Australian box jellyfish).